The primary structure comprises 49 residues: Defensin Tm-AMP-D1.2 (49 aa).

Disulfide bonds link Cys-3/Cys-49, Cys-14/Cys-34, Cys-20/Cys-43, and Cys-24/Cys-45.

Functionally, plant defense peptide. This Triticum monococcum (Einkorn wheat) protein is Defensin Tm-AMP-D1.2.